We begin with the raw amino-acid sequence, 102 residues long: Small ribosomal subunit protein eS24 (102 aa).

The protein belongs to the eukaryotic ribosomal protein eS24 family.

The chain is Small ribosomal subunit protein eS24 from Methanococcus maripaludis (strain C7 / ATCC BAA-1331).